We begin with the raw amino-acid sequence, 616 residues long: Ectonucleoside triphosphate diphosphohydrolase 4 (616 aa).

The Cytoplasmic portion of the chain corresponds to 1 to 33 (MGRIGISCLFPASWHFSISPVGCPRILNTNLRQ). Residues 34–54 (IMVISVLAAAVSLLYFSVVII) traverse the membrane as a helical segment. Topologically, residues 55–559 (RNKYGRLTRD…ASHTHWRGVS (505 aa)) are lumenal. Glutamate 222 (proton acceptor) is an active-site residue. Cysteines 368 and 395 form a disulfide. Asparagine 404 and asparagine 407 each carry an N-linked (GlcNAc...) asparagine glycan. The cysteines at positions 461 and 490 are disulfide-linked. Residues 560 to 580 (FVYNHYLFSGCFLVVLLAILL) traverse the membrane as a helical segment. Residues 581–616 (YLLRLRRIHRRTPRSSSAAALWMEEGLPAQNAPGTL) are Cytoplasmic-facing.

It belongs to the GDA1/CD39 NTPase family. Ca(2+) is required as a cofactor. The cofactor is Mg(2+). As to expression, ubiquitous. Highest expression in testis and lowest in bladder.

Its subcellular location is the cytoplasmic vesicle. It localises to the autophagosome membrane. The protein resides in the lysosome membrane. The protein localises to the golgi apparatus membrane. It carries out the reaction a ribonucleoside 5'-diphosphate + H2O = a ribonucleoside 5'-phosphate + phosphate + H(+). It catalyses the reaction a ribonucleoside 5'-triphosphate + H2O = a ribonucleoside 5'-diphosphate + phosphate + H(+). The enzyme catalyses UDP + H2O = UMP + phosphate + H(+). The catalysed reaction is UTP + H2O = UDP + phosphate + H(+). It carries out the reaction CTP + H2O = CDP + phosphate + H(+). It catalyses the reaction GDP + H2O = GMP + phosphate + H(+). The enzyme catalyses GTP + H2O = GDP + phosphate + H(+). The catalysed reaction is 5-methyl-UTP + H2O = 5-methyl-UDP + phosphate + H(+). Functionally, catalyzes the hydrolysis of nucleoside triphosphates and diphosphates in a calcium- or magnesium-dependent manner, with a preference for pyrimidines. Preferentially hydrolyzes UTP and TTP. AMP, ADP, ATP and UMP are not substrates. Preferentially activated by Ca(2+) over Mg(2+). Its function is as follows. Has a broad substrate specificity with the ability of cleaving all nucleotide di- and triphosphates with the exception of adenosine di- and triphosphate (ADP and ATP). Preferentially hydrolyzes CTP, UDP, CDP, GTP and GDP. Can use either Ca(2+) or Mg(2+) equally. The protein is Ectonucleoside triphosphate diphosphohydrolase 4 of Homo sapiens (Human).